Here is a 1608-residue protein sequence, read N- to C-terminus: DNA-directed RNA polymerase III subunit rpc2 (1608 aa).

4 residues coordinate Zn(2+): C1557, C1560, C1569, and C1572. Residues 1557–1572 (CKNCGFLGYEGYCQYC) form a C4-type zinc finger.

Belongs to the RNA polymerase beta chain family. As to quaternary structure, component of the RNA polymerase III (Pol III) complex. In terms of processing, this protein undergoes a protein self splicing that involves a post-translational excision of the intervening region (intein) followed by peptide ligation.

The protein resides in the nucleus. The enzyme catalyses RNA(n) + a ribonucleoside 5'-triphosphate = RNA(n+1) + diphosphate. DNA-dependent RNA polymerase catalyzes the transcription of DNA into RNA using the four ribonucleoside triphosphates as substrates. Second largest core component of RNA polymerase III which synthesizes small RNAs, such as 5S rRNA and tRNAs. Proposed to contribute to the polymerase catalytic activity and forms the polymerase active center together with the largest subunit. Pol III is composed of mobile elements and rpc2 is part of the core element with the central large cleft and probably a clamp element that moves to open and close the cleft. This is DNA-directed RNA polymerase III subunit rpc2 (polr3b) from Dictyostelium discoideum (Social amoeba).